Consider the following 114-residue polypeptide: uncharacterized protein (114 aa).

In terms of biological role, possibly involved in pGI2 replication mechanism. This is an uncharacterized protein from Bacillus thuringiensis.